The following is a 178-amino-acid chain: Large ribosomal subunit protein bL25 (178 aa).

This sequence belongs to the bacterial ribosomal protein bL25 family. CTC subfamily. Part of the 50S ribosomal subunit; part of the 5S rRNA/L5/L18/L25 subcomplex. Contacts the 5S rRNA. Binds to the 5S rRNA independently of L5 and L18.

Functionally, this is one of the proteins that binds to the 5S RNA in the ribosome where it forms part of the central protuberance. The polypeptide is Large ribosomal subunit protein bL25 (Helicobacter pylori (strain Shi470)).